Consider the following 385-residue polypeptide: uncharacterized protein (385 aa).

This sequence belongs to the mimivirus L17x/L18x family.

This is an uncharacterized protein from Acanthamoeba polyphaga mimivirus (APMV).